We begin with the raw amino-acid sequence, 1642 residues long: Coiled-coil domain-containing protein 7A (1642 aa).

The tract at residues 21 to 51 is disordered; the sequence is PYKKGLLNSSPKPKEKHNAKSKYGKNESMVL. Residues 161-184 form an LRR 1 repeat; sequence VNQMEEISKDQSNLEELQSDGKTA. A coiled-coil region spans residues 279 to 330; that stretch reads LEKALNDQQTIESKYKQLETDFQMLIMEKTLLEAEIRRLREIERVKSAAKEE. An LRR 2 repeat occupies 1310-1333; that stretch reads IKELSKTLNLDGGDIELSDFVFKT.

Exclusively expressed in the testes.

This Mus musculus (Mouse) protein is Coiled-coil domain-containing protein 7A.